The sequence spans 907 residues: Phototropin-2 (907 aa).

The interval 28 to 84 (ATAGLEIVAEDAPSGSSGAHQQQAWRPVAPATAGRDSGGTGSGKSSVDGGVGRASHD) is disordered. Positions 41-51 (SGSSGAHQQQA) are enriched in polar residues. The region spanning 89–162 (VSQELKDALS…AKIRDAVKHG (74 aa)) is the PAS 1 domain. FMN contacts are provided by residues 138–143 (NCRFLQ), R156, N171, N181, and Q202. C139 carries the post-translational modification S-4a-FMN cysteine. One can recognise a PAC 1 domain in the interval 163 to 217 (RSFCGRLLNYRKDGAPFWNLLTVTPIRDDNGKVIKFIGMQVEVSKYTEGLSDKRM). A disordered region spans residues 332-363 (RSSVGSREAPAVVEEPAPAPPPAPEVVERTDS). The PAS 2 domain maps to 375 to 448 (QGIDLATTLE…DKIREAIREQ (74 aa)). Residues 424 to 429 (NCRFLQ), R442, N457, N467, and Q488 each bind FMN. C425 carries the post-translational modification S-4a-FMN cysteine. The region spanning 449–503 (KEITVQLINYTKSGKKFWNLFHLQPMRDQKGELQYFIGVQLDGSDHVEPLRNRLS) is the PAC 2 domain. The Protein kinase domain occupies 576-863 (FKPVKPLGCG…ANDIKQHSFF (288 aa)). Residues 582–590 (LGCGDTGSV) and K605 each bind ATP. D701 acts as the Proton acceptor in catalysis.

The protein belongs to the protein kinase superfamily. Ser/Thr protein kinase family. Homodimer. It depends on FMN as a cofactor. In terms of processing, autophosphorylated in response to blue light irradiation. 2 molecules of FMN bind covalently to cysteines after exposure to blue light and are reversed in the dark. In terms of tissue distribution, expressed at low levels in leaves of dark-grown seedlings.

The catalysed reaction is L-seryl-[protein] + ATP = O-phospho-L-seryl-[protein] + ADP + H(+). The enzyme catalyses L-threonyl-[protein] + ATP = O-phospho-L-threonyl-[protein] + ADP + H(+). Protein kinase that acts as a blue light photoreceptor in a signal-transduction pathway for phototropic responses. Regulates a wide range of physiological activities in plants that maximize the efficiency of photosynthesis, such as chloroplast relocations, stomata opening, and leaf expansion. The polypeptide is Phototropin-2 (PHOT2) (Oryza sativa subsp. japonica (Rice)).